A 177-amino-acid polypeptide reads, in one-letter code: Inorganic pyrophosphatase (177 aa).

Residues lysine 30, arginine 44, and tyrosine 56 each coordinate substrate. Residues aspartate 66, aspartate 71, and aspartate 103 each contribute to the Mg(2+) site. Tyrosine 142 is a binding site for substrate.

Belongs to the PPase family. In terms of assembly, homohexamer. It depends on Mg(2+) as a cofactor.

Its subcellular location is the cytoplasm. The enzyme catalyses diphosphate + H2O = 2 phosphate + H(+). Its function is as follows. Catalyzes the hydrolysis of inorganic pyrophosphate (PPi) forming two phosphate ions. The protein is Inorganic pyrophosphatase of Caulobacter vibrioides (strain ATCC 19089 / CIP 103742 / CB 15) (Caulobacter crescentus).